The primary structure comprises 485 residues: Delta(14)-sterol reductase ERG24A (485 aa).

Helical transmembrane passes span 18–38 (FFGP…VYVF), 77–97 (GLVS…SLIL), 131–151 (LAVL…WTFM), and 155–175 (FIQI…FVYV). Residue asparagine 240 is glycosylated (N-linked (GlcNAc...) asparagine). The next 4 membrane-spanning stretches (helical) occupy residues 259 to 279 (ILIT…EPAI), 285 to 305 (ITTD…VPYV), 319 to 339 (SLGP…FYIF), and 431 to 451 (AQGW…ILLI).

The protein belongs to the ERG4/ERG24 family.

The protein resides in the endoplasmic reticulum membrane. The catalysed reaction is 4,4-dimethyl-5alpha-cholesta-8,24-dien-3beta-ol + NADP(+) = 4,4-dimethyl-5alpha-cholesta-8,14,24-trien-3beta-ol + NADPH + H(+). It functions in the pathway steroid metabolism; ergosterol biosynthesis. Delta(14)-sterol reductase; part of the third module of ergosterol biosynthesis pathway that includes the late steps of the pathway. Catalyzes the reduction of the C14=C15 double bond within 4,4,24-trimethyl ergosta-8,14,24(28)-trienolto produce 4,4-dimethylfecosterol. The third module or late pathway involves the ergosterol synthesis itself through consecutive reactions that mainly occur in the endoplasmic reticulum (ER) membrane. Firstly, the squalene synthase ERG9 catalyzes the condensation of 2 farnesyl pyrophosphate moieties to form squalene, which is the precursor of all steroids. Squalene synthase is crucial for balancing the incorporation of farnesyl diphosphate (FPP) into sterol and nonsterol isoprene synthesis. Secondly, squalene is converted into lanosterol by the consecutive action of the squalene epoxidase ERG1 and the lanosterol synthase ERG7. Then, the delta(24)-sterol C-methyltransferase ERG6 methylates lanosterol at C-24 to produce eburicol. Eburicol is the substrate of the sterol 14-alpha demethylase encoded by CYP51A, CYP51B and CYP51C, to yield 4,4,24-trimethyl ergosta-8,14,24(28)-trienol. CYP51B encodes the enzyme primarily responsible for sterol 14-alpha-demethylation, and plays an essential role in ascospore formation. CYP51A encodes an additional sterol 14-alpha-demethylase, induced on ergosterol depletion and responsible for the intrinsic variation in azole sensitivity. The third CYP51 isoform, CYP51C, does not encode a sterol 14-alpha-demethylase, but is required for full virulence on host wheat ears. The C-14 reductase ERG24 then reduces the C14=C15 double bond which leads to 4,4-dimethylfecosterol. A sequence of further demethylations at C-4, involving the C-4 demethylation complex containing the C-4 methylsterol oxidases ERG25, the sterol-4-alpha-carboxylate 3-dehydrogenase ERG26 and the 3-keto-steroid reductase ERG27, leads to the production of fecosterol via 4-methylfecosterol. ERG28 has a role as a scaffold to help anchor ERG25, ERG26 and ERG27 to the endoplasmic reticulum. The C-8 sterol isomerase ERG2 then catalyzes the reaction which results in unsaturation at C-7 in the B ring of sterols and thus converts fecosterol to episterol. The sterol-C5-desaturases ERG3A and ERG3BB then catalyze the introduction of a C-5 double bond in the B ring to produce 5-dehydroepisterol. The C-22 sterol desaturases ERG5A and ERG5B further convert 5-dehydroepisterol into ergosta-5,7,22,24(28)-tetraen-3beta-ol by forming the C-22(23) double bond in the sterol side chain. Finally, ergosta-5,7,22,24(28)-tetraen-3beta-ol is substrate of the C-24(28) sterol reductase ERG4 to produce ergosterol. This Gibberella zeae (strain ATCC MYA-4620 / CBS 123657 / FGSC 9075 / NRRL 31084 / PH-1) (Wheat head blight fungus) protein is Delta(14)-sterol reductase ERG24A.